A 526-amino-acid chain; its full sequence is Phosphoenolpyruvate carboxylase (526 aa).

This sequence belongs to the PEPCase type 2 family. Homotetramer. The cofactor is Mg(2+).

The catalysed reaction is oxaloacetate + phosphate = phosphoenolpyruvate + hydrogencarbonate. Catalyzes the irreversible beta-carboxylation of phosphoenolpyruvate (PEP) to form oxaloacetate (OAA), a four-carbon dicarboxylic acid source for the tricarboxylic acid cycle. The sequence is that of Phosphoenolpyruvate carboxylase from Methanosarcina acetivorans (strain ATCC 35395 / DSM 2834 / JCM 12185 / C2A).